The chain runs to 458 residues: Cysteine--tRNA ligase (458 aa).

Cys-29 serves as a coordination point for Zn(2+). Residues 31–41 (MTVYDLCHLGH) carry the 'HIGH' region motif. The Zn(2+) site is built by Cys-213, His-238, and Glu-242. The short motif at 270–274 (KMSKS) is the 'KMSKS' region element. ATP is bound at residue Lys-273.

It belongs to the class-I aminoacyl-tRNA synthetase family. As to quaternary structure, monomer. Zn(2+) serves as cofactor.

Its subcellular location is the cytoplasm. It carries out the reaction tRNA(Cys) + L-cysteine + ATP = L-cysteinyl-tRNA(Cys) + AMP + diphosphate. In Acidovorax sp. (strain JS42), this protein is Cysteine--tRNA ligase.